A 172-amino-acid chain; its full sequence is NAD(P)H-quinone oxidoreductase subunit J (172 aa).

The protein belongs to the complex I 30 kDa subunit family. In terms of assembly, NDH-1 can be composed of about 15 different subunits; different subcomplexes with different compositions have been identified which probably have different functions.

The protein resides in the cellular thylakoid membrane. It catalyses the reaction a plastoquinone + NADH + (n+1) H(+)(in) = a plastoquinol + NAD(+) + n H(+)(out). The enzyme catalyses a plastoquinone + NADPH + (n+1) H(+)(in) = a plastoquinol + NADP(+) + n H(+)(out). In terms of biological role, NDH-1 shuttles electrons from an unknown electron donor, via FMN and iron-sulfur (Fe-S) centers, to quinones in the respiratory and/or the photosynthetic chain. The immediate electron acceptor for the enzyme in this species is believed to be plastoquinone. Couples the redox reaction to proton translocation, and thus conserves the redox energy in a proton gradient. Cyanobacterial NDH-1 also plays a role in inorganic carbon-concentration. The polypeptide is NAD(P)H-quinone oxidoreductase subunit J (Synechococcus elongatus (strain ATCC 33912 / PCC 7942 / FACHB-805) (Anacystis nidulans R2)).